A 247-amino-acid chain; its full sequence is Membrane-embedded CAAX protease MroQ (247 aa).

The first 17 residues, 1–17 (MTRLWASLLTVIIYILS), serve as a signal peptide directing secretion. A run of 3 helical transmembrane segments spans residues 42-62 (VIYIQLVLFLIAATTIILINL), 81-101 (IIPWALLGFALVMIYQMVVSI), and 119-139 (LIIIARKIPIFIFFVSIIGPL). Glutamate 141 is a catalytic residue. Helical transmembrane passes span 162-182 (IVAFIIATTVSSLIFALAHND) and 183-203 (FKFIPVYFGMGVIFSLAYVWT).

Belongs to the peptidase U48 family.

It localises to the membrane. Participates in the regulation of the Agr quorum sensing activity and plays thereby an important role in virulence. Mechanistically, elicits a protease dependent control of Agr activity without playing a role in the processing of the pheromone-precursor AgrD. This Staphylococcus aureus (strain USA300) protein is Membrane-embedded CAAX protease MroQ (mroQ).